A 95-amino-acid polypeptide reads, in one-letter code: Integration host factor subunit beta (95 aa).

The protein belongs to the bacterial histone-like protein family. Heterodimer of an alpha and a beta chain.

In terms of biological role, this protein is one of the two subunits of integration host factor, a specific DNA-binding protein that functions in genetic recombination as well as in transcriptional and translational control. The protein is Integration host factor subunit beta of Jannaschia sp. (strain CCS1).